Here is a 424-residue protein sequence, read N- to C-terminus: Histidine--tRNA ligase (424 aa).

The protein belongs to the class-II aminoacyl-tRNA synthetase family. As to quaternary structure, homodimer.

The protein localises to the cytoplasm. The enzyme catalyses tRNA(His) + L-histidine + ATP = L-histidyl-tRNA(His) + AMP + diphosphate + H(+). This is Histidine--tRNA ligase from Klebsiella pneumoniae (strain 342).